The primary structure comprises 102 residues: MIHKLTSEERKTRLEGLPHWTAVPGRDAIQRRLRFADFNEAFGFMTRVAIKAQEMNHHPEWFNVYNRVDVTLSTHDADGLTERDIELARFIDGAATHAQPGA.

The protein belongs to the pterin-4-alpha-carbinolamine dehydratase family.

It catalyses the reaction (4aS,6R)-4a-hydroxy-L-erythro-5,6,7,8-tetrahydrobiopterin = (6R)-L-erythro-6,7-dihydrobiopterin + H2O. This chain is Putative pterin-4-alpha-carbinolamine dehydratase, found in Burkholderia cenocepacia (strain ATCC BAA-245 / DSM 16553 / LMG 16656 / NCTC 13227 / J2315 / CF5610) (Burkholderia cepacia (strain J2315)).